Reading from the N-terminus, the 101-residue chain is NADH-quinone oxidoreductase subunit K 1 (101 aa).

3 consecutive transmembrane segments (helical) span residues 4-24 (IGTM…TVGV), 31-51 (VVIL…LVAF), and 64-84 (IFVM…VIAF).

This sequence belongs to the complex I subunit 4L family. NDH-1 is composed of 14 different subunits. Subunits NuoA, H, J, K, L, M, N constitute the membrane sector of the complex.

It is found in the cell inner membrane. It carries out the reaction a quinone + NADH + 5 H(+)(in) = a quinol + NAD(+) + 4 H(+)(out). NDH-1 shuttles electrons from NADH, via FMN and iron-sulfur (Fe-S) centers, to quinones in the respiratory chain. The immediate electron acceptor for the enzyme in this species is believed to be ubiquinone. Couples the redox reaction to proton translocation (for every two electrons transferred, four hydrogen ions are translocated across the cytoplasmic membrane), and thus conserves the redox energy in a proton gradient. The sequence is that of NADH-quinone oxidoreductase subunit K 1 from Koribacter versatilis (strain Ellin345).